The sequence spans 185 residues: Peptidyl-tRNA hydrolase (185 aa).

Y14 contacts tRNA. H19 (proton acceptor) is an active-site residue. 3 residues coordinate tRNA: Y64, N66, and N112.

This sequence belongs to the PTH family. As to quaternary structure, monomer.

It localises to the cytoplasm. It catalyses the reaction an N-acyl-L-alpha-aminoacyl-tRNA + H2O = an N-acyl-L-amino acid + a tRNA + H(+). Functionally, hydrolyzes ribosome-free peptidyl-tRNAs (with 1 or more amino acids incorporated), which drop off the ribosome during protein synthesis, or as a result of ribosome stalling. Its function is as follows. Catalyzes the release of premature peptidyl moieties from peptidyl-tRNA molecules trapped in stalled 50S ribosomal subunits, and thus maintains levels of free tRNAs and 50S ribosomes. The polypeptide is Peptidyl-tRNA hydrolase (Lactobacillus delbrueckii subsp. bulgaricus (strain ATCC 11842 / DSM 20081 / BCRC 10696 / JCM 1002 / NBRC 13953 / NCIMB 11778 / NCTC 12712 / WDCM 00102 / Lb 14)).